The following is a 224-amino-acid chain: A-type ATP synthase subunit D (224 aa).

A compositionally biased stretch (basic and acidic residues) spans 200–209 (KKVKDKKEAQ). A disordered region spans residues 200–224 (KKVKDKKEAQEEAADEAAAAESTGA). Residues 215–224 (EAAAAESTGA) show a composition bias toward low complexity.

This sequence belongs to the V-ATPase D subunit family. Has multiple subunits with at least A(3), B(3), C, D, E, F, H, I and proteolipid K(x).

The protein resides in the cell membrane. In terms of biological role, component of the A-type ATP synthase that produces ATP from ADP in the presence of a proton gradient across the membrane. This chain is A-type ATP synthase subunit D, found in Halobacterium salinarum (strain ATCC 29341 / DSM 671 / R1).